Here is a 157-residue protein sequence, read N- to C-terminus: Small ribosomal subunit protein uS7 (157 aa).

The protein belongs to the universal ribosomal protein uS7 family. Part of the 30S ribosomal subunit. Contacts proteins S9 and S11.

Functionally, one of the primary rRNA binding proteins, it binds directly to 16S rRNA where it nucleates assembly of the head domain of the 30S subunit. Is located at the subunit interface close to the decoding center, probably blocks exit of the E-site tRNA. The chain is Small ribosomal subunit protein uS7 from Acidovorax ebreus (strain TPSY) (Diaphorobacter sp. (strain TPSY)).